Consider the following 210-residue polypeptide: Glutathione S-transferase P (210 aa).

The 80-residue stretch at 2–81 (ASYTIVYFPV…HLGRTLGLYG (80 aa)) folds into the GST N-terminal domain. Tyrosine 4 is modified (phosphotyrosine; by EGFR). Residues tyrosine 8, arginine 14, tryptophan 39, lysine 45, and 52 to 53 (QL) each bind glutathione. Threonine 62 carries the phosphothreonine modification. A glutathione-binding site is contributed by 65–66 (QS). Residues 83–204 (DQREAALVDM…ASPEHVNRPI (122 aa)) enclose the GST C-terminal domain. An N6-succinyllysine mark is found at lysine 103 and lysine 116. The residue at position 128 (lysine 128) is an N6-acetyllysine.

This sequence belongs to the GST superfamily. Pi family. As to quaternary structure, homodimer. Interacts with CDK5.

It is found in the cytoplasm. The protein resides in the mitochondrion. The protein localises to the nucleus. The enzyme catalyses RX + glutathione = an S-substituted glutathione + a halide anion + H(+). It carries out the reaction prostaglandin J2 + glutathione = prostaglandin J2-S-(R)-glutathione. The catalysed reaction is prostaglandin J2 + glutathione = prostaglandin J2-S-(S)-glutathione. It catalyses the reaction prostaglandin A2 + glutathione = prostaglandin A2-S-(S)-glutathione. The enzyme catalyses 11(S)-hydroxy-14(S),15(S)-epoxy-(5Z,8Z,12E)-eicosatrienoate + glutathione = (11S,15S)-dihydroxy-14(R)-S-glutathionyl-(5Z,8Z,12E)-eicosatrienoate. Functionally, conjugation of reduced glutathione to a wide number of exogenous and endogenous hydrophobic electrophiles. Involved in the formation of glutathione conjugates of both prostaglandin A2 (PGA2) and prostaglandin J2 (PGJ2). Participates in the formation of novel hepoxilin regioisomers. Negatively regulates CDK5 activity via p25/p35 translocation to prevent neurodegeneration. This Capra hircus (Goat) protein is Glutathione S-transferase P (GSTP1).